The chain runs to 719 residues: MRRASGVLRVLGGLTQRCSTSSTPSSSRFPAMNSRRKRNSVRKTATIEDIVEPRKVKHVTQTAAGMGEWIGSLDNTNIHMSLDEFMRRPMVRQLAKENGINDKLFMRSFKSFREYCTPEDLNSVDPGLLILLSDISKGTKDCEMLYPFFLDHAKQVFPHLEAMDDLRIISDLTRPHNWYPEARSVTRKIFFHAGPTNSGKTYHALKRFGEAKSAVFCGPLKLLAAEVFHRTNELGIPCDLVTGEERRFAKDNHHPSQHLSSTVEMLSTQMRVEVAVIDEIQMLRDEQRGWAWTRALLGAAADEIHLCGEPAAIDIVKKLLEPIGETVEVRYYERKSPLAIADKAIESYSNIEPGDCIVCFSKRSIFFNSKKLEENGIKPAVIYGDLPPGTKLAQAAKFNDPDDECNVLVATDAIGMGLNLNIRRVIFNSCTRQTELLPTYAALQIAGRAGRFGTAYANGVATTMRKEDLGTLKAILSEKIEPIANVGIAPTYDQIETFSFHLPQASFVRLLDLFVSVCSVSDHFFICTVYDMRELAVLIDQIPLPLKVRYTFCTSPLNTEDKRTSAVFVKMARRFSTGQALTYEWLIDMLEWPPKPATTLNELSLLEQNYEILDQYMWLSMRFPDMLPDEPRVREASKHLDSMIQEGVESFMSLLSVGATESKAAGSSKSSEGKRENPSKSEREKPNKRSSILEALLKRADISEDDLEQLREELNKNKK.

A mitochondrion-targeting transit peptide spans 1–18 (MRRASGVLRVLGGLTQRC). A disordered region spans residues 16 to 42 (QRCSTSSTPSSSRFPAMNSRRKRNSVR). Positions 181-319 (EARSVTRKIF…PAAIDIVKKL (139 aa)) constitute a Helicase ATP-binding domain. 194–201 (GPTNSGKT) contributes to the ATP binding site. Positions 343–499 (KAIESYSNIE…PTYDQIETFS (157 aa)) constitute a Helicase C-terminal domain. The interval 662–692 (SKAAGSSKSSEGKRENPSKSEREKPNKRSSI) is disordered. Over residues 671–687 (SEGKRENPSKSEREKPN) the composition is skewed to basic and acidic residues. Positions 693 to 717 (LEALLKRADISEDDLEQLREELNKN) form a coiled coil.

It belongs to the helicase family. Mg(2+) is required as a cofactor. Mn(2+) serves as cofactor.

The protein resides in the mitochondrion matrix. Its subcellular location is the nucleus. It carries out the reaction ATP + H2O = ADP + phosphate + H(+). In terms of biological role, ATPase and DNA/RNA helicase able to unwind DNA/DNA, DNA/RNA and RNA/RNA duplexes in the 5'-3' direction. The polypeptide is ATP-dependent RNA helicase SUV3 homolog, mitochondrial (Caenorhabditis elegans).